Reading from the N-terminus, the 488-residue chain is Intron-encoded DNA endonuclease I-AniI (488 aa).

The interval 1–169 (MRILKSHPLL…DIVEFIWGGL (169 aa)) is cobA exon 1 encoded. Residues 170–488 (YTDEPQCGDV…SEKIKIPSNY (319 aa)) form a cobA intron encoded region.

This sequence in the C-terminal section; belongs to the LAGLIDADG endonuclease family. Homodimer. Mg(2+) serves as cofactor. The mature protein may arise from proteolytic cleavage of an in-frame translation of cobA exon 1 plus intron, containing the I-AniI open reading frame. Cleavage may take place close to Met-213 resulting in an active endonuclease/maturase of about 30 kDa.

Its subcellular location is the mitochondrion. Mitochondrial DNA endonuclease and mRNA maturase involved in intron homing and required for splicing of the cytochrome b (cobA) gene intron, containing its own coding sequence. The protein stimulates the intrinsic ribozyme activity of the intron through binding to and stabilizing specific secondary and tertiary structure elements in the RNA. As an endonuclease it introduces a specific double-strand break at the junction of the two exons the cobA gene and thus mediates the insertion of an intron, containing its own coding sequence (group I intron), into an intronless gene. Recognizes with limited specificity and cleaves the sequence 5'-GAGGAGGTTTCTCTGTA-3'. The proteins RNA and DNA recognition and binding surfaces are independent. The sequence is that of Intron-encoded DNA endonuclease I-AniI (I-AniI) from Emericella nidulans (Aspergillus nidulans).